A 151-amino-acid chain; its full sequence is UPF0178 protein Shal_3046 (151 aa).

This sequence belongs to the UPF0178 family.

The polypeptide is UPF0178 protein Shal_3046 (Shewanella halifaxensis (strain HAW-EB4)).